A 292-amino-acid chain; its full sequence is Peroxisomal 2,4-dienoyl-CoA reductase SPS19 [(3E)-enoyl-CoA-producing] (292 aa).

NADP(+) is bound by residues Ile36, Asp85, and Lys145. Ser162 functions as the Proton donor in the catalytic mechanism. Residue Lys180 coordinates NADP(+). Residue Lys180 is the Lowers pKa of active site Tyr of the active site. Lys188 is covalently cross-linked (Glycyl lysine isopeptide (Lys-Gly) (interchain with G-Cter in ubiquitin)). Residue Ile209 coordinates NADP(+). The short motif at 290 to 292 (SKL) is the Microbody targeting signal element.

It belongs to the short-chain dehydrogenases/reductases (SDR) family. In terms of assembly, homodimer.

Its subcellular location is the peroxisome. It catalyses the reaction a (2E,4Z)-dienoyl-CoA + NADPH + H(+) = a 4,5-saturated-(3E)-enoyl-CoA + NADP(+). The catalysed reaction is a (2E,4E)-dienoyl-CoA + NADPH + H(+) = a 4,5-saturated-(3E)-enoyl-CoA + NADP(+). Auxiliary enzyme of beta-oxidation. Participates in the degradation of unsaturated fatty enoyl-CoA esters having double bonds in both even- and odd-numbered positions in peroxisome. Catalyzes the NADP-dependent reduction of 2,4-dienoyl-CoA to yield trans-3-enoyl-CoA. Dispensable for growth and sporulation on solid acetate and oleate media, but is essential for these processes to occur on petroselineate. The sequence is that of Peroxisomal 2,4-dienoyl-CoA reductase SPS19 [(3E)-enoyl-CoA-producing] (SPS19) from Saccharomyces cerevisiae (strain ATCC 204508 / S288c) (Baker's yeast).